A 216-amino-acid polypeptide reads, in one-letter code: MRDQFISLALMLCILHSACGLYFHISETERKCFIEEVPDETTVIVNYKVELYDPRSNGFMPSSPGIGMHVEVRDSDDKIVLSRVYSSQGRISFTSHTPGEHVICMYSNSTAWFSGAQLRVHLDIQVGEHAIDYANVAQKEKLTELQLRIRQLLDQVEQITKEQNYQRYREERFRHTSESTNSRVLWWSLAQTVVLVCMGFWQMRHLKSFFEAKKLV.

An N-terminal signal peptide occupies residues 1–20 (MRDQFISLALMLCILHSACG). The Lumenal portion of the chain corresponds to 21–182 (LYFHISETER…FRHTSESTNS (162 aa)). Positions 30–126 (RKCFIEEVPD…QLRVHLDIQV (97 aa)) constitute a GOLD domain. The stretch at 134 to 164 (ANVAQKEKLTELQLRIRQLLDQVEQITKEQN) forms a coiled coil. A helical transmembrane segment spans residues 183–203 (RVLWWSLAQTVVLVCMGFWQM). The Cytoplasmic segment spans residues 204–216 (RHLKSFFEAKKLV). The Prevents secretion from ER motif lies at 213–216 (KKLV).

This sequence belongs to the EMP24/GP25L family.

It is found in the endoplasmic reticulum membrane. Functionally, eca and bai are essential, though not redundant, for dorsoventral patterning of the embryo. Specifically required during early embryogenesis for the activity of maternal tkv, while the zygotic tkv is not affected. Involved in Golgi organization. This Drosophila erecta (Fruit fly) protein is Transmembrane emp24 domain-containing protein eca.